A 210-amino-acid polypeptide reads, in one-letter code: Somatotropin (210 aa).

The signal sequence occupies residues Met-1 to Ser-23. His-38 lines the Zn(2+) pocket. Cys-71 and Cys-183 are joined by a disulfide. A Zn(2+)-binding site is contributed by Glu-192. Residues Cys-200 and Cys-208 are joined by a disulfide bond.

The protein belongs to the somatotropin/prolactin family.

Its subcellular location is the secreted. Growth hormone plays an important role in growth control. The sequence is that of Somatotropin (gh) from Ctenopharyngodon idella (Grass carp).